The following is a 328-amino-acid chain: DNA polymerase III subunit delta' (328 aa).

In terms of assembly, DNA polymerase III contains a core (composed of alpha, epsilon and theta chains) that associates with a tau subunit. This core dimerizes to form the POLIII' complex. PolIII' associates with the gamma complex (composed of gamma, delta, delta', psi and chi chains) and with the beta chain to form the complete DNA polymerase III complex.

The enzyme catalyses DNA(n) + a 2'-deoxyribonucleoside 5'-triphosphate = DNA(n+1) + diphosphate. In terms of biological role, DNA polymerase III is a complex, multichain enzyme responsible for most of the replicative synthesis in bacteria. This DNA polymerase also exhibits 3' to 5' exonuclease activity. This chain is DNA polymerase III subunit delta' (holB), found in Pseudomonas aeruginosa (strain ATCC 15692 / DSM 22644 / CIP 104116 / JCM 14847 / LMG 12228 / 1C / PRS 101 / PAO1).